Here is an 86-residue protein sequence, read N- to C-terminus: uncharacterized protein (86 aa).

It is found in the mitochondrion. This is an uncharacterized protein from Marchantia polymorpha (Common liverwort).